We begin with the raw amino-acid sequence, 32 residues long: Enolase (32 aa).

The protein belongs to the enolase family. Homodimer. Requires Mg(2+) as cofactor.

The protein resides in the cytoplasm. It carries out the reaction (2R)-2-phosphoglycerate = phosphoenolpyruvate + H2O. It functions in the pathway carbohydrate degradation; glycolysis; pyruvate from D-glyceraldehyde 3-phosphate: step 4/5. The chain is Enolase from Imperata cylindrica (Cogon grass).